Here is a 2009-residue protein sequence, read N- to C-terminus: ADP-ribosylation factor guanine nucleotide-exchange factor SEC7 (2009 aa).

The interval 1-220 (MSEQNSVVNA…ISLSSNGSNT (220 aa)) is disordered. The span at 17 to 33 (ISSNVETASSVNPSVKP) shows a compositional bias: polar residues. Over residues 37–53 (IKEEAKETNGEDQKCKG) the composition is skewed to basic and acidic residues. Over residues 91 to 118 (EGEDGDEDEDEDEDEDEDNGDEDDEDVD) the composition is skewed to acidic residues. Residues 134–143 (SVSGESTESS) show a composition bias toward low complexity. Positions 144–154 (SGEDEESDESD) are enriched in acidic residues. The span at 155–165 (GNTSNSSSGDE) shows a compositional bias: low complexity. Acidic residues predominate over residues 166–184 (SGSEEEEEEEEEEEEEENA). A compositionally biased stretch (polar residues) spans 194 to 209 (SVPTNDSTAPRSTHTR). A compositionally biased stretch (low complexity) spans 210–220 (NISLSSNGSNT). 2 positions are modified to phosphoserine: serine 212 and serine 215. Threonine 334 is modified (phosphothreonine). Serine 447, serine 452, and serine 455 each carry phosphoserine. The HUS box signature appears at 653 to 657 (NYDCN). Low complexity predominate over residues 771–788 (SSARQESRSSLSNDVRSS). Positions 771 to 814 (SSARQESRSSLSNDVRSSIMTSNDDFKPTYEDEESRSLSSQNID) are disordered. A Glycyl lysine isopeptide (Lys-Gly) (interchain with G-Cter in ubiquitin) cross-link involves residue lysine 797. Serine 807 is subject to Phosphoserine. One can recognise an SEC7 domain in the interval 824-1010 (LKLRKTALSE…LFNEIANNEI (187 aa)). Aspartate 940 is a binding site for Mg(2+). Residues 1017 to 1220 (HQAMLSGDTN…QARVANPRVS (204 aa)) are HDS1 domain. Serine 1226 bears the Phosphoserine mark. A Phosphothreonine modification is found at threonine 1240. Over residues 1708–1723 (GRKSSVSHHQTTNDTS) the composition is skewed to polar residues. A disordered region spans residues 1708–1803 (GRKSSVSHHQ…KKTKHMKRNE (96 aa)). Residues 1724–1751 (QHSDDDSNDRRENDSNISETVERAHQEE) show a composition bias toward basic and acidic residues. Phosphoserine occurs at positions 1741 and 1752. Polar residues predominate over residues 1764-1777 (LNGQTKLNNGNSVP). The tract at residues 1836–1883 (FENEDFAHCIPYKEAIRITRLLEKSYEFSRDFNEDYGLRTRLVEARVV) is C2 domain-interacting region (CIR).

As to quaternary structure, interacts with ARF1. Interacts (via C-terminus) with RSP5 ubiquitin ligase.

It is found in the cytoplasm. It localises to the golgi apparatus. The protein localises to the trans-Golgi network. The protein resides in the cytoplasmic vesicle. Its subcellular location is the COPI-coated vesicle membrane. It is found in the COPII-coated vesicle membrane. Guanine exchange factor that acts as an activator of ARF1 at the trans-Golgi network and is thus involved in vesicular budding and traffic between compartments of the Golgi apparatus. Activation of Arf (ADP-ribosylation factor) GTPases is essential for vesicle formation via recruitment of cargo adapters and coat proteins necessary for Golgi trafficking. Also plays an essential role in ER-to-Golgi traffic. SEC7 also acts as an effector of two Rab GTPases, YPT1 and YPT31/32. This Saccharomyces cerevisiae (strain ATCC 204508 / S288c) (Baker's yeast) protein is ADP-ribosylation factor guanine nucleotide-exchange factor SEC7.